The sequence spans 86 residues: UPF0437 protein Ava_4254 (86 aa).

Belongs to the UPF0437 family.

This chain is UPF0437 protein Ava_4254, found in Trichormus variabilis (strain ATCC 29413 / PCC 7937) (Anabaena variabilis).